The following is a 326-amino-acid chain: Tagatose 1,6-diphosphate aldolase (326 aa).

The protein belongs to the aldolase LacD family.

It carries out the reaction D-tagatofuranose 1,6-bisphosphate = D-glyceraldehyde 3-phosphate + dihydroxyacetone phosphate. The protein operates within carbohydrate metabolism; D-tagatose 6-phosphate degradation; D-glyceraldehyde 3-phosphate and glycerone phosphate from D-tagatose 6-phosphate: step 2/2. This chain is Tagatose 1,6-diphosphate aldolase, found in Staphylococcus aureus (strain bovine RF122 / ET3-1).